Reading from the N-terminus, the 196-residue chain is MNSAALIETITQLISPLITAQGLKLWGIELINIPQPIIKIFVDTIETNRLHENNIINSKSEQITIEQCASLSRLIGLTLEVEELFPNKWTLEVSSPGLERSFFTIQQLSNYINHDIDVTLKEQHPLWPNRKKFYGTLISITDNTFMLNLSLAHRKSDEPENVSINWQQVRKATLVHHFFQPNKKLGSTKGLNGGTT.

It belongs to the RimP family.

The protein localises to the cytoplasm. Functionally, required for maturation of 30S ribosomal subunits. The polypeptide is Ribosome maturation factor RimP (Lawsonia intracellularis (strain PHE/MN1-00)).